A 37-amino-acid chain; its full sequence is M-oxotoxin-Ot2c (37 aa).

In terms of tissue distribution, expressed by the venom gland.

Its subcellular location is the secreted. Functionally, disrupts biological membranes, particularly those rich in phosphocholine. Has antimicrobial activity against Gram-negative bacterium E.coli, Gram-positive bacteria B.subtilis and S.aureus, and hemolytic activity against sheep, pig and guinea pig red blood cells. Has insecticidal activity against S.frugiperda ovarian cells by opening non-selective ion channels. Enhances the insecticidal activity of spider venom neurotoxic peptides. This chain is M-oxotoxin-Ot2c, found in Oxyopes takobius (Lynx spider).